Reading from the N-terminus, the 281-residue chain is CCAAT/enhancer-binding protein epsilon (281 aa).

The segment at 1–30 (MSHGTYYECEPRGGQQPLEFSGGRAGPGEL) is disordered. K121 participates in a covalent cross-link: Glycyl lysine isopeptide (Lys-Gly) (interchain with G-Cter in SUMO2). Position 181 is a phosphoserine (S181). Positions 204–267 (SLEYRLRRER…DTLRNLFRQI (64 aa)) constitute a bZIP domain. The tract at residues 208 to 245 (RLRRERNNIAVRKSRDKAKRRIMETQQKVLEYMAENER) is basic motif. Positions 246–267 (LRNRVDQLTQELDTLRNLFRQI) are leucine-zipper.

It belongs to the bZIP family. C/EBP subfamily. In terms of assembly, binds DNA as a homodimer and as a heterodimer. Can form stable heterodimers with CEBPA, CEBPB and CEBPD. Interacts with GATA1 and SPI1. Interacts with SMARCD2. In terms of processing, phosphorylated.

The protein localises to the nucleus. Its function is as follows. Transcriptional activator. C/EBP are DNA-binding proteins that recognize two different motifs: the CCAAT homology common to many promoters and the enhanced core homology common to many enhancers. Required for the promyelocyte-myelocyte transition in myeloid differentiation. The protein is CCAAT/enhancer-binding protein epsilon (Cebpe) of Mus musculus (Mouse).